We begin with the raw amino-acid sequence, 526 residues long: ATP-dependent RNA helicase DBP3 (526 aa).

The segment covering 1–33 (MVEEHKNKKRRQEDGPADVPEKKVKVSKSEKKD) has biased composition (basic and acidic residues). The interval 1-86 (MVEEHKNKKR…SSQGYTQSES (86 aa)) is disordered. The span at 34-65 (KKEKKEKKEKKEKKEKKEKKEKKEKKEKKKKY) shows a compositional bias: basic residues. Residues 69–86 (ATISGSAQSSQGYTQSES) are compositionally biased toward polar residues. The Q motif motif lies at 118–144 (LSFDQIQLNSKISAVVNKFPTPTPIQS). In terms of domain architecture, Helicase ATP-binding spans 147-318 (WPYLLSGKDV…STFMNQPVKV (172 aa)). Residue 160-167 (AETGSGKT) coordinates ATP. The DEAD box motif lies at 265–268 (DEAD). The 163-residue stretch at 334–496 (QIVEVIEPFD…PVPDELLKFG (163 aa)) folds into the Helicase C-terminal domain.

Belongs to the DEAD box helicase family. DDX5/DBP2 subfamily.

The protein localises to the nucleus. It localises to the nucleolus. It carries out the reaction ATP + H2O = ADP + phosphate + H(+). ATP-dependent RNA helicase required for 60S ribosomal subunit synthesis. Involved in efficient pre-rRNA processing, predominantly at site A3, which is necessary for the normal formation of 25S and 5.8S rRNAs. The protein is ATP-dependent RNA helicase DBP3 (DBP3) of Scheffersomyces stipitis (strain ATCC 58785 / CBS 6054 / NBRC 10063 / NRRL Y-11545) (Yeast).